Consider the following 187-residue polypeptide: Crossover junction endodeoxyribonuclease RuvC (187 aa).

Catalysis depends on residues Asp7, Glu67, and Asp140. 3 residues coordinate Mg(2+): Asp7, Glu67, and Asp140.

It belongs to the RuvC family. Homodimer which binds Holliday junction (HJ) DNA. The HJ becomes 2-fold symmetrical on binding to RuvC with unstacked arms; it has a different conformation from HJ DNA in complex with RuvA. In the full resolvosome a probable DNA-RuvA(4)-RuvB(12)-RuvC(2) complex forms which resolves the HJ. Mg(2+) serves as cofactor.

Its subcellular location is the cytoplasm. The enzyme catalyses Endonucleolytic cleavage at a junction such as a reciprocal single-stranded crossover between two homologous DNA duplexes (Holliday junction).. Its function is as follows. The RuvA-RuvB-RuvC complex processes Holliday junction (HJ) DNA during genetic recombination and DNA repair. Endonuclease that resolves HJ intermediates. Cleaves cruciform DNA by making single-stranded nicks across the HJ at symmetrical positions within the homologous arms, yielding a 5'-phosphate and a 3'-hydroxyl group; requires a central core of homology in the junction. The consensus cleavage sequence is 5'-(A/T)TT(C/G)-3'. Cleavage occurs on the 3'-side of the TT dinucleotide at the point of strand exchange. HJ branch migration catalyzed by RuvA-RuvB allows RuvC to scan DNA until it finds its consensus sequence, where it cleaves and resolves the cruciform DNA. The protein is Crossover junction endodeoxyribonuclease RuvC of Chlorobaculum parvum (strain DSM 263 / NCIMB 8327) (Chlorobium vibrioforme subsp. thiosulfatophilum).